Reading from the N-terminus, the 339-residue chain is Phospho-N-acetylmuramoyl-pentapeptide-transferase (339 aa).

Helical transmembrane passes span 4–24 (TTIIAGIISFILTILAMPFFI), 53–73 (MGGTVFLLVAALVTFICAFVL), 80–100 (AFGATLAILFIVLIYGTIGFL), 113–133 (GLTAWQKMALQLIGGLVFYLV), 145–165 (LFGFPLHLGVFYIIFILFWVV), 176–196 (GIDGLASISVVISLLTYSVIA), 202–222 (FDVLLIIISMVGALLGFFVYN), 228–248 (VFMGDVGSLALGAMLAAISIT), 253–273 (WTLLIIGIVYVLETASVMLQV), and 318–338 (VDFFLWSIGLLGSLLILAILY).

Belongs to the glycosyltransferase 4 family. MraY subfamily. The cofactor is Mg(2+).

It is found in the cell membrane. It carries out the reaction UDP-N-acetyl-alpha-D-muramoyl-L-alanyl-gamma-D-glutamyl-L-lysyl-D-alanyl-D-alanine + di-trans,octa-cis-undecaprenyl phosphate = Mur2Ac(oyl-L-Ala-gamma-D-Glu-L-Lys-D-Ala-D-Ala)-di-trans,octa-cis-undecaprenyl diphosphate + UMP. It participates in cell wall biogenesis; peptidoglycan biosynthesis. Functionally, catalyzes the initial step of the lipid cycle reactions in the biosynthesis of the cell wall peptidoglycan: transfers peptidoglycan precursor phospho-MurNAc-pentapeptide from UDP-MurNAc-pentapeptide onto the lipid carrier undecaprenyl phosphate, yielding undecaprenyl-pyrophosphoryl-MurNAc-pentapeptide, known as lipid I. The protein is Phospho-N-acetylmuramoyl-pentapeptide-transferase of Streptococcus mutans serotype c (strain ATCC 700610 / UA159).